The following is a 1423-amino-acid chain: MRPSTVTSRIWWSESSSSSSHDLSGSWEHTSLQRTSDHFSSMGSIDSLDHSSQLYPSGHLSSAKSNSSIDHLGGHSKRDSAYGSFSTCSSTPDHTLPKADASSTENILYKVGLWEASRPGSSRQSQSTGDPQGLQDRPSSFLPRVPGNSSKSPRPEDNIEPKIATSGRSNFGPVWYVPDKKKAPSPPPLGLPLRSDSFAVAARGHEKARGPPFSDLASMQHFTTLPHVQPRGDRRMETTDRQWKLAHPSSGKEIGNVGYQPEGHLDCRWLCSDDRAGRPSGAPGRHQFSLSSTDVHFLKSYHGSQHPQPCSDESPRFPSSPRELLRITPSGCLQEPPELSQDDNPAQVRWPGSVNQKLDDRGRSHYFSVPHRQPVHGSAHVLIPRSDYWHSDTTPVDLECPLLRPDQRGYPQQYEETPASHERGGYQQLNAGIEGCCSGIHEPPRASHTVRAGLQCPGNDFKLVDAESGRISRQRTPMLHSLTQDGAWRPGNSKDCGNEKPPLLDAQVGKPTRRSDRFATTLRNEIQMRRAKLQKSKSTVTLAGDSEAEDCAGDWRVDVGAVPEGSFPSTYKEHLKEAQTRVLKATSFQRRDLDPTPADQYPGPPEHRTCDHSASSSLSSFPGEPDSAPRLCEAGLAKPPSSAGGVPHILRIGGRKRFTAEQKLKSYSEPEKINEVGLSGDHSPHPTIRTSEDSVGTFADRWKFFEETSKSLLQKPGHRQAFCGIPREKAERPQTQGHECESTEPWFQKRSRATSCGEILSEDRKVEKASEKLNPPRRLGTFAEYQASWKEQKKSLEARSSGRYHSADDILDAGLDQQQRPQYIHERSRSSPSTDHYSQEVPVEPNRQAEDSGGQKEALLCTLQAEEGCSAPSSSVLSSAQPQDSQHVNEDPTSPQPEAQLSSKCQHLQTSTMETSRSPSPQFAPQKLTDKPPLLIHEDNSARYCPVTACYVFIPCRLQVFVAGALPQLQTLGIERVMDNNTTVKMVPIKIVHSESQPEKESRQSLACPAELPALPSGLEKDQIKTLSTSEQCYSRFCVYTRQEVETPHRARPPEPQPPSTPAPPVRDSCSSPPSLNYGKAKEKTVDDLKSEELAREIVGKDKSLADILDPSVKIKTTMDLMEGIFPKDEYLLEEAQQRRKLLPKVPSPRVTEDNSCPSLSAICYNLGTRSKSVPVSQLIKIKILASSPRKQDPGMPGVVSLATNSTYYSTSAPKAELLIKMKDLQEPEEYSAGDLDHDLSIKKQELIDSISRKLQVLREARESLLEDIQANNALGDEVEAIVKDVCKPNEFDKFRMFIGDLDKVVNLLLSLSGRLARVENALNNLDDSPSPGDRQSLLEKQRVLTQQHEDAKELKENLDRRERIVFDILATYLSEENLADYEHFVKMKSALIIEQRELEDKIHLGEEQLKCLFDSLQPERSK.

Residues 1 to 101 (MRPSTVTSRI…PDHTLPKADA (101 aa)) are disordered. Low complexity predominate over residues 8-27 (SRIWWSESSSSSSHDLSGSW). Polar residues-rich tracts occupy residues 28 to 69 (EHTS…NSSI) and 83 to 93 (GSFSTCSSTPD). Ser103 is subject to Phosphoserine. Positions 116–171 (ASRPGSSRQSQSTGDPQGLQDRPSSFLPRVPGNSSKSPRPEDNIEPKIATSGRSNF) are disordered. A compositionally biased stretch (polar residues) spans 119 to 130 (PGSSRQSQSTGD). Phosphoserine occurs at positions 185, 197, and 291. Disordered stretches follow at residues 300-357 (SYHG…VNQK), 586-630 (TSFQ…SAPR), 758-855 (EILS…SGGQ), 872-930 (PSSS…KLTD), and 1045-1085 (VETP…KEKT). An ASD1 domain is found at 575-677 (LKEAQTRVLK…SEPEKINEVG (103 aa)). The span at 761-771 (SEDRKVEKASE) shows a compositional bias: basic and acidic residues. Phosphoserine is present on residues Ser806, Ser830, Ser831, and Ser833. Phosphothreonine is present on Thr834. Residues 872–885 (PSSSVLSSAQPQDS) are compositionally biased toward low complexity. The span at 891-923 (DPTSPQPEAQLSSKCQHLQTSTMETSRSPSPQF) shows a compositional bias: polar residues. Phosphoserine is present on residues Ser918 and Ser920. Positions 1054 to 1065 (PEPQPPSTPAPP) are enriched in pro residues. Phosphoserine is present on residues Ser1072 and Ser1329. The ASD2 domain occupies 1092 to 1418 (EELAREIVGK…QLKCLFDSLQ (327 aa)).

It belongs to the shroom family. Interacts with F-actin.

It localises to the apical cell membrane. The protein localises to the cell junction. Its subcellular location is the tight junction. The protein resides in the cytoplasm. It is found in the cytoskeleton. May be involved in endothelial cell morphology changes during cell spreading. In the retinal pigment epithelium, may regulate the biogenesis of melanosomes and promote their association with the apical cell surface by inducing gamma-tubulin redistribution. In Rattus norvegicus (Rat), this protein is Protein Shroom2 (Shroom2).